The chain runs to 156 residues: ATP synthase subunit b (156 aa).

The helical transmembrane segment at 7 to 26 (LIGQAIWFALFIWITMKYVW) threads the bilayer.

It belongs to the ATPase B chain family. In terms of assembly, F-type ATPases have 2 components, F(1) - the catalytic core - and F(0) - the membrane proton channel. F(1) has five subunits: alpha(3), beta(3), gamma(1), delta(1), epsilon(1). F(0) has three main subunits: a(1), b(2) and c(10-14). The alpha and beta chains form an alternating ring which encloses part of the gamma chain. F(1) is attached to F(0) by a central stalk formed by the gamma and epsilon chains, while a peripheral stalk is formed by the delta and b chains.

The protein localises to the cell inner membrane. Functionally, f(1)F(0) ATP synthase produces ATP from ADP in the presence of a proton or sodium gradient. F-type ATPases consist of two structural domains, F(1) containing the extramembraneous catalytic core and F(0) containing the membrane proton channel, linked together by a central stalk and a peripheral stalk. During catalysis, ATP synthesis in the catalytic domain of F(1) is coupled via a rotary mechanism of the central stalk subunits to proton translocation. In terms of biological role, component of the F(0) channel, it forms part of the peripheral stalk, linking F(1) to F(0). This is ATP synthase subunit b from Dechloromonas aromatica (strain RCB).